Consider the following 638-residue polypeptide: Intron-encoded RNA maturase bI4 (638 aa).

Residues 1-253 are COB exons 1 to 4 encoded; it reads MAFRKSNVYL…VFYSPNTLGQ (253 aa). The interval 253–638 is COB intron 4 encoded; that stretch reads QNMALLLITY…LKFNEKWNNN (386 aa).

It in the C-terminal section; belongs to the LAGLIDADG endonuclease family. As to quaternary structure, forms a ternary complex with intron derived RNA and the imported mitochondrial leucyl-tRNA synthetase NAM2. The proteins do not interact directly with each other. The mature protein may arise from proteolytic cleavage of an in-frame translation of COB exons 1 to 4 plus intron 4, containing the bI4 open reading frame. Cleavage would take place close to the Met-385 resulting in an active maturase of about 30 kDa.

It is found in the mitochondrion. In terms of biological role, mitochondrial mRNA maturase required for splicing of intron 4 of the cytochrome b (COB) gene, containing its own coding sequence, and intron 4 in COX1, coding for the related homing endonuclease aI4. In vivo splicing requires in addition the imported mitochondrial leucyl-tRNA synthetase NAM2. Both proteins seem to stimulate the intrinsic ribozyme activity of intron bI4 through binding to and stabilizing specific secondary and tertiary structure elements in the RNA. This Saccharomyces cerevisiae (strain ATCC 204508 / S288c) (Baker's yeast) protein is Intron-encoded RNA maturase bI4 (BI4).